Reading from the N-terminus, the 525-residue chain is Erythropoietin receptor (525 aa).

The first 32 residues, 1–32 (MGAPSSLLFSTAHWRTVPFLLAFWVLLSTGTA), serve as a signal peptide directing secretion. The Extracellular portion of the chain corresponds to 33-249 (EDPTMTPEFL…TIATIIDLRL (217 aa)). Cys-58 and Cys-68 form a disulfide bridge. Asn-77, Asn-100, Asn-149, and Asn-185 each carry an N-linked (GlcNAc...) asparagine glycan. Cys-91 and Cys-107 form a disulfide bridge. Residues 146 to 246 (PPLNVTVKEK…APITIATIID (101 aa)) form the Fibronectin type-III domain. Positions 232 to 236 (WSDWT) match the WSXWS motif motif. Residues 250–270 (LLLLSIAIFVALIAGVGVYIF) form a helical membrane-spanning segment. Residues 271-525 (MRHGMYLKHK…NFLAPIYSQS (255 aa)) are Cytoplasmic-facing. The short motif at 281 to 289 (VWPQVPTPE) is the Box 1 motif element. Disordered stretches follow at residues 434–459 (APRMEHERHRVSRENSVSSDGKQSIP) and 492–513 (LDMSSSGEHSPPPSPNFYQNSP). Polar residues predominate over residues 447–459 (ENSVSSDGKQSIP). The short motif at 487–492 (LKYAYL) is the ITIM motif element.

This sequence belongs to the type I cytokine receptor family. Type 1 subfamily. In terms of tissue distribution, expressed in the ventral blood island from stage 28 through to stage 36. Expressed in the circulating blood by stage 40. In the adult, highly expressed in peripheral blood cells including immature erythrocytes and basophils, and moderately expressed in the hematopoietic organs: liver, kidney and spleen. Expressed at a low level in adult brain.

It is found in the cell membrane. Functionally, receptor for erythropoietin. Mediates erythropoietin-induced erythroblast proliferation and differentiation. The protein is Erythropoietin receptor of Xenopus laevis (African clawed frog).